A 71-amino-acid chain; its full sequence is uncharacterized protein (71 aa).

The interval 1-71 (MLFETLKSLS…AFFSRPFYSE (71 aa)) is disordered. A compositionally biased stretch (polar residues) spans 7–33 (KSLSQQNGGQFSDEQSFESPISSSFNG). The span at 35-65 (SMPFGSPSSTMSSSYKGNTNSSTKSSSAFFS) shows a compositional bias: low complexity.

This is an uncharacterized protein from Dictyostelium discoideum (Social amoeba).